The following is a 279-amino-acid chain: Elongation factor Ts (279 aa).

The segment at 80-83 is involved in Mg(2+) ion dislocation from EF-Tu; the sequence is TDFV.

This sequence belongs to the EF-Ts family.

Its subcellular location is the cytoplasm. Associates with the EF-Tu.GDP complex and induces the exchange of GDP to GTP. It remains bound to the aminoacyl-tRNA.EF-Tu.GTP complex up to the GTP hydrolysis stage on the ribosome. This chain is Elongation factor Ts (tsf), found in Borreliella burgdorferi (strain ATCC 35210 / DSM 4680 / CIP 102532 / B31) (Borrelia burgdorferi).